Here is a 387-residue protein sequence, read N- to C-terminus: Eukaryotic translation initiation factor 3 subunit M (387 aa).

The region spanning 181-340 (LSSKVMIELL…QKVHISSTMH (160 aa)) is the PCI domain.

Belongs to the eIF-3 subunit M family. In terms of assembly, component of the eukaryotic translation initiation factor 3 (eIF-3) complex. The eIF-3 complex interacts with pix.

Its subcellular location is the cytoplasm. The protein localises to the golgi apparatus. Component of the eukaryotic translation initiation factor 3 (eIF-3) complex, which is involved in protein synthesis of a specialized repertoire of mRNAs and, together with other initiation factors, stimulates binding of mRNA and methionyl-tRNAi to the 40S ribosome. The eIF-3 complex specifically targets and initiates translation of a subset of mRNAs involved in cell proliferation. The polypeptide is Eukaryotic translation initiation factor 3 subunit M (Drosophila sechellia (Fruit fly)).